The following is a 207-amino-acid chain: LexA repressor (207 aa).

Positions 28-48 form a DNA-binding region, H-T-H motif; that stretch reads RAEISRELGFKSANAAEEHLK. Active-site for autocatalytic cleavage activity residues include Ser-123 and Lys-160.

Belongs to the peptidase S24 family. As to quaternary structure, homodimer.

It carries out the reaction Hydrolysis of Ala-|-Gly bond in repressor LexA.. Represses a number of genes involved in the response to DNA damage (SOS response), including recA and lexA. In the presence of single-stranded DNA, RecA interacts with LexA causing an autocatalytic cleavage which disrupts the DNA-binding part of LexA, leading to derepression of the SOS regulon and eventually DNA repair. The chain is LexA repressor from Haemophilus influenzae (strain ATCC 51907 / DSM 11121 / KW20 / Rd).